Reading from the N-terminus, the 357-residue chain is Elongation factor Ts (357 aa).

Residues 82–85 (TDFV) form an involved in Mg(2+) ion dislocation from EF-Tu region.

Belongs to the EF-Ts family.

It is found in the cytoplasm. In terms of biological role, associates with the EF-Tu.GDP complex and induces the exchange of GDP to GTP. It remains bound to the aminoacyl-tRNA.EF-Tu.GTP complex up to the GTP hydrolysis stage on the ribosome. This chain is Elongation factor Ts, found in Campylobacter jejuni (strain RM1221).